The sequence spans 221 residues: uncharacterized protein (221 aa).

This is an uncharacterized protein from Archaeoglobus fulgidus (strain ATCC 49558 / DSM 4304 / JCM 9628 / NBRC 100126 / VC-16).